We begin with the raw amino-acid sequence, 226 residues long: uncharacterized protein (226 aa).

The helical transmembrane segment at 203–225 (FGISDIYTSTLSFGLIISLFYLL) threads the bilayer.

The protein localises to the membrane. This is an uncharacterized protein from Acanthamoeba polyphaga (Amoeba).